The sequence spans 496 residues: NAD(P)H-quinone oxidoreductase subunit 2, chloroplastic (496 aa).

The next 14 membrane-spanning stretches (helical) occupy residues 14-34 (SFLP…LDLV), 42-62 (MLVK…IQQW), 79-99 (FTTC…PLSF), 109-129 (LTEF…LSSA), 133-153 (ITIF…TGYV), 167-187 (LIIG…LYGL), 210-230 (LASW…LSLV), 244-264 (PTPV…ALTI), 281-301 (ILQI…MVET), 305-325 (RILT…IVAG), 334-354 (LVYM…IILF), 377-397 (ASCL…TGFF), 400-420 (ILLF…TGIF), and 469-489 (IYLC…VIYF).

The protein belongs to the complex I subunit 2 family. In terms of assembly, NDH is composed of at least 16 different subunits, 5 of which are encoded in the nucleus.

The protein resides in the plastid. It localises to the chloroplast thylakoid membrane. The enzyme catalyses a plastoquinone + NADH + (n+1) H(+)(in) = a plastoquinol + NAD(+) + n H(+)(out). It carries out the reaction a plastoquinone + NADPH + (n+1) H(+)(in) = a plastoquinol + NADP(+) + n H(+)(out). Functionally, NDH shuttles electrons from NAD(P)H:plastoquinone, via FMN and iron-sulfur (Fe-S) centers, to quinones in the photosynthetic chain and possibly in a chloroplast respiratory chain. The immediate electron acceptor for the enzyme in this species is believed to be plastoquinone. Couples the redox reaction to proton translocation, and thus conserves the redox energy in a proton gradient. The chain is NAD(P)H-quinone oxidoreductase subunit 2, chloroplastic from Chara vulgaris (Common stonewort).